The primary structure comprises 330 residues: Peroxidase 42 (330 aa).

An N-terminal signal peptide occupies residues 1–23; the sequence is MGGKGVMMVAILCLWALSATSEA. Disulfide bonds link Cys40/Cys119, Cys73/Cys78, Cys125/Cys323, and Cys204/Cys231. His71 functions as the Proton acceptor in the catalytic mechanism. Residues Asp72, Val75, Asp79, and Ser81 each coordinate Ca(2+). Pro167 provides a ligand contact to substrate. Residue Asn170 is glycosylated (N-linked (GlcNAc...) asparagine). A heme b-binding site is contributed by His197. Residue Ser198 participates in Ca(2+) binding. Ca(2+) contacts are provided by Asp247, Thr250, and Asp255.

This sequence belongs to the peroxidase family. Classical plant (class III) peroxidase subfamily. Requires heme b as cofactor. It depends on Ca(2+) as a cofactor. In terms of tissue distribution, constitutively expressed in the whole plant, with the highest expression in roots.

Its subcellular location is the secreted. The catalysed reaction is 2 a phenolic donor + H2O2 = 2 a phenolic radical donor + 2 H2O. Removal of H(2)O(2), oxidation of toxic reductants, biosynthesis and degradation of lignin, suberization, auxin catabolism, response to environmental stresses such as wounding, pathogen attack and oxidative stress. These functions might be dependent on each isozyme/isoform in each plant tissue. In terms of biological role, might function as heat shock-like defense protein. This Arabidopsis thaliana (Mouse-ear cress) protein is Peroxidase 42 (PER42).